Consider the following 154-residue polypeptide: MAARLCCQLDPARDVLCLRPVSAESCGRPVSGSLGDLSSPSPSAVPADHGAHLSLRGLPVCAFSSAGPCALRFTSARRMETTVNAHQILPKVLHKRTLGLSAMSTTDLEAYFKDCLFKDWEELGEEIRLKVFVLGGCRHKLVCAPAPCNFFTSA.

The mitochondrial targeting sequence stretch occupies residues 68–117 (PCALRFTSARRMETTVNAHQILPKVLHKRTLGLSAMSTTDLEAYFKDCLF).

Belongs to the orthohepadnavirus protein X family. May form homodimer. May interact with host CEBPA, CFLAR, CREB1, DDB1, E4F1, HBXIP, HSPD1/HSP60, NFKBIA, POLR2E and SMAD4. Interacts with host SMC5-SMC6 complex and induces its degradation. Interacts with host TRPC4AP; leading to prevent ubiquitination of TRPC4AP. Interacts with host PLSCR1; this interaction promotes ubiquitination and degradation of HBx and impairs HBx-mediated cell proliferation. In terms of processing, a fraction may be phosphorylated in insect cells and HepG2 cells, a human hepatoblastoma cell line. Phosphorylated in vitro by host protein kinase C or mitogen-activated protein kinase. N-acetylated in insect cells.

The protein localises to the host cytoplasm. It is found in the host nucleus. Its subcellular location is the host mitochondrion. Its function is as follows. Multifunctional protein that plays a role in silencing host antiviral defenses and promoting viral transcription. Does not seem to be essential for HBV infection. May be directly involved in development of cirrhosis and liver cancer (hepatocellular carcinoma). Most of cytosolic activities involve modulation of cytosolic calcium. The effect on apoptosis is controversial depending on the cell types in which the studies have been conducted. May induce apoptosis by localizing in mitochondria and causing loss of mitochondrial membrane potential. May also modulate apoptosis by binding host CFLAR, a key regulator of the death-inducing signaling complex (DISC). Promotes viral transcription by using the host E3 ubiquitin ligase DDB1 to target the SMC5-SMC6 complex to proteasomal degradation. This host complex would otherwise bind to viral episomal DNA, and prevents its transcription. Moderately stimulates transcription of many different viral and cellular transcription elements. Promoters and enhancers stimulated by HBx contain DNA binding sites for NF-kappa-B, AP-1, AP-2, c-EBP, ATF/CREB, or the calcium-activated factor NF-AT. The polypeptide is Protein X (Hepatitis B virus genotype E subtype ayw4 (isolate Kou) (HBV-E)).